The sequence spans 241 residues: Probable GTP-binding protein EngB (241 aa).

The EngB-type G domain maps to 56-240 (GPVEIAFAGR…RAAIALLLKE (185 aa)). Residues 64-71 (GRSNVGKS), 91-95 (GRTQE), 118-121 (DMPG), 185-188 (TKID), and 219-221 (TSS) contribute to the GTP site. Mg(2+)-binding residues include Ser-71 and Thr-93.

Belongs to the TRAFAC class TrmE-Era-EngA-EngB-Septin-like GTPase superfamily. EngB GTPase family. Mg(2+) serves as cofactor.

Functionally, necessary for normal cell division and for the maintenance of normal septation. The chain is Probable GTP-binding protein EngB from Brucella suis biovar 1 (strain 1330).